The sequence spans 83 residues: Apolipoprotein C-I, acidic form (83 aa).

Positions 1 to 26 (MRLFLSLPVLVVVLSMVLEGPAPAQG) are cleaved as a signal peptide.

Belongs to the apolipoprotein C1 family.

It is found in the secreted. The protein is Apolipoprotein C-I, acidic form (APOC1A) of Pan troglodytes (Chimpanzee).